We begin with the raw amino-acid sequence, 428 residues long: Enolase (428 aa).

Gln-163 contributes to the (2R)-2-phosphoglycerate binding site. Catalysis depends on Glu-205, which acts as the Proton donor. Mg(2+) is bound by residues Asp-242, Glu-285, and Asp-312. The (2R)-2-phosphoglycerate site is built by Lys-337, Arg-366, Ser-367, and Lys-388. Lys-337 acts as the Proton acceptor in catalysis.

It belongs to the enolase family. It depends on Mg(2+) as a cofactor.

Its subcellular location is the cytoplasm. It is found in the secreted. It localises to the cell surface. The catalysed reaction is (2R)-2-phosphoglycerate = phosphoenolpyruvate + H2O. Its pathway is carbohydrate degradation; glycolysis; pyruvate from D-glyceraldehyde 3-phosphate: step 4/5. Functionally, catalyzes the reversible conversion of 2-phosphoglycerate (2-PG) into phosphoenolpyruvate (PEP). It is essential for the degradation of carbohydrates via glycolysis. This is Enolase from Novosphingobium aromaticivorans (strain ATCC 700278 / DSM 12444 / CCUG 56034 / CIP 105152 / NBRC 16084 / F199).